The primary structure comprises 283 residues: MFS-type transporter eupM (283 aa).

The next 7 membrane-spanning stretches (helical) occupy residues 68-88 (LVAW…WGAM), 111-131 (IAWI…VAGP), 136-156 (GGFK…YMML), 165-185 (VLLA…TPMI), 196-216 (IGLA…VYPI), 227-247 (FAWT…IPII), and 263-283 (LIDL…ATMI).

Belongs to the major facilitator superfamily. Monocarboxylate porter (TC 2.A.1.13) family.

Its subcellular location is the membrane. Its function is as follows. MFS-type transporter; part of the gene cluster that mediates the biosynthesis of eupenifeldin, a bistropolone meroterpenoid that acts as an antitumor agent. This is MFS-type transporter eupM from Phoma sp.